The following is a 468-amino-acid chain: Soluble pyridine nucleotide transhydrogenase (468 aa).

38-47 provides a ligand contact to FAD; that stretch reads ERHYNVGGGC.

The protein belongs to the class-I pyridine nucleotide-disulfide oxidoreductase family. The cofactor is FAD.

The protein resides in the cytoplasm. It catalyses the reaction NAD(+) + NADPH = NADH + NADP(+). Conversion of NADPH, generated by peripheral catabolic pathways, to NADH, which can enter the respiratory chain for energy generation. The polypeptide is Soluble pyridine nucleotide transhydrogenase (Pectobacterium atrosepticum (strain SCRI 1043 / ATCC BAA-672) (Erwinia carotovora subsp. atroseptica)).